Consider the following 816-residue polypeptide: tRNA(Met) cytidine acetyltransferase TmcA (816 aa).

ATP-binding residues include Q265 and R439. The 196-residue stretch at 469–664 (ELIRKMEVYL…YTAIVIKPIS (196 aa)) folds into the N-acetyltransferase domain. Residues 589-591 (IAT), E629, and R636 each bind acetyl-CoA.

This sequence belongs to the TmcA family.

Its subcellular location is the cytoplasm. The enzyme catalyses cytidine(34) in elongator tRNA(Met) + acetyl-CoA + ATP + H2O = N(4)-acetylcytidine(34) in elongator tRNA(Met) + ADP + phosphate + CoA + H(+). The catalysed reaction is a cytidine in RNA + acetyl-CoA + ATP + H2O = an N(4)-acetylcytidine in RNA + ADP + phosphate + CoA + H(+). It catalyses the reaction a cytidine in tRNA + acetyl-CoA + ATP + H2O = an N(4)-acetylcytidine in tRNA + ADP + phosphate + CoA + H(+). It carries out the reaction a cytidine in mRNA + acetyl-CoA + ATP + H2O = an N(4)-acetylcytidine in mRNA + ADP + phosphate + CoA + H(+). In terms of biological role, catalyzes the formation of N(4)-acetylcytidine (ac(4)C) at the wobble position of tRNA(Met), by using acetyl-CoA as an acetyl donor and ATP (or GTP). Its function is as follows. Catalyzes the formation of 233 N(4)-acetylcytidine (ac(4)C) sites in RNA, on the middle C of a CCG motif. Modifications are found in rRNA, ncRNA, mRNA and tRNA. More acetylation is observed at 85 than at 65 or 75 degrees Celsius. The sequence is that of tRNA(Met) cytidine acetyltransferase TmcA from Pyrococcus furiosus (strain ATCC 43587 / DSM 3638 / JCM 8422 / Vc1).